The following is a 118-amino-acid chain: Large ribosomal subunit protein bL19 (118 aa).

The protein belongs to the bacterial ribosomal protein bL19 family.

In terms of biological role, this protein is located at the 30S-50S ribosomal subunit interface and may play a role in the structure and function of the aminoacyl-tRNA binding site. This Onion yellows phytoplasma (strain OY-M) protein is Large ribosomal subunit protein bL19.